The chain runs to 148 residues: Small ribosomal subunit protein bS6 (148 aa).

Positions H96–A148 are disordered.

The protein belongs to the bacterial ribosomal protein bS6 family.

Functionally, binds together with bS18 to 16S ribosomal RNA. The polypeptide is Small ribosomal subunit protein bS6 (Brucella suis (strain ATCC 23445 / NCTC 10510)).